The primary structure comprises 95 residues: Integration host factor subunit beta (95 aa).

It belongs to the bacterial histone-like protein family. Heterodimer of an alpha and a beta chain.

In terms of biological role, this protein is one of the two subunits of integration host factor, a specific DNA-binding protein that functions in genetic recombination as well as in transcriptional and translational control. Involved in hydrogenase gene expression. The polypeptide is Integration host factor subunit beta (ihfB) (Rhodobacter capsulatus (Rhodopseudomonas capsulata)).